The sequence spans 426 residues: Enolase (426 aa).

Q163 serves as a coordination point for (2R)-2-phosphoglycerate. The Proton donor role is filled by E205. 3 residues coordinate Mg(2+): D242, E286, and D313. K338, R367, S368, and K389 together coordinate (2R)-2-phosphoglycerate. The Proton acceptor role is filled by K338.

The protein belongs to the enolase family. Mg(2+) serves as cofactor.

It localises to the cytoplasm. The protein resides in the secreted. Its subcellular location is the cell surface. It catalyses the reaction (2R)-2-phosphoglycerate = phosphoenolpyruvate + H2O. It functions in the pathway carbohydrate degradation; glycolysis; pyruvate from D-glyceraldehyde 3-phosphate: step 4/5. In terms of biological role, catalyzes the reversible conversion of 2-phosphoglycerate (2-PG) into phosphoenolpyruvate (PEP). It is essential for the degradation of carbohydrates via glycolysis. This is Enolase from Helicobacter pylori (strain ATCC 700392 / 26695) (Campylobacter pylori).